The chain runs to 875 residues: Alanine--tRNA ligase (875 aa).

Zn(2+) is bound by residues His-567, His-571, Cys-669, and His-673.

The protein belongs to the class-II aminoacyl-tRNA synthetase family. The cofactor is Zn(2+).

It is found in the cytoplasm. It catalyses the reaction tRNA(Ala) + L-alanine + ATP = L-alanyl-tRNA(Ala) + AMP + diphosphate. In terms of biological role, catalyzes the attachment of alanine to tRNA(Ala) in a two-step reaction: alanine is first activated by ATP to form Ala-AMP and then transferred to the acceptor end of tRNA(Ala). Also edits incorrectly charged Ser-tRNA(Ala) and Gly-tRNA(Ala) via its editing domain. This is Alanine--tRNA ligase from Geobacter sulfurreducens (strain ATCC 51573 / DSM 12127 / PCA).